The primary structure comprises 343 residues: Protein FAM50A-B (343 aa).

Disordered regions lie at residues 1–25 and 125–181; these read MAQYKGAASEAGRAMQLMKKREKQR and EEDE…EEEN. Over residues 125–142 the composition is skewed to acidic residues; the sequence is EEDEECEDEESEEEEEEY. A compositionally biased stretch (basic and acidic residues) spans 172–181; the sequence is PDRDREEEEN.

It belongs to the FAM50 family.

It is found in the nucleus. In terms of biological role, probably involved in the regulation of pre-mRNA splicing. This chain is Protein FAM50A-B (fam50a-b), found in Xenopus laevis (African clawed frog).